The chain runs to 799 residues: Lon protease 4 (799 aa).

In terms of domain architecture, Lon N-terminal spans 15–204 (FPLLPLRTGV…RVAGLLAEAS (190 aa)). 356-363 (GPPGVGKT) provides a ligand contact to ATP. The Lon proteolytic domain maps to 595-776 (TSVAGVATGL…SQVIAAALEE (182 aa)). Catalysis depends on residues S682 and K725.

Belongs to the peptidase S16 family. In terms of assembly, homohexamer. Organized in a ring with a central cavity.

It is found in the cytoplasm. It catalyses the reaction Hydrolysis of proteins in presence of ATP.. ATP-dependent serine protease that mediates the selective degradation of mutant and abnormal proteins as well as certain short-lived regulatory proteins. Required for cellular homeostasis and for survival from DNA damage and developmental changes induced by stress. Degrades polypeptides processively to yield small peptide fragments that are 5 to 10 amino acids long. Binds to DNA in a double-stranded, site-specific manner. In Sorangium cellulosum (strain So ce56) (Polyangium cellulosum (strain So ce56)), this protein is Lon protease 4.